Consider the following 777-residue polypeptide: DISP complex protein LRCH3 (777 aa).

LRR repeat units follow at residues 56 to 79 (AAVT…AANH), 81 to 104 (LTDT…ACHF), 105 to 127 (VSLE…ILNL), 128 to 150 (QALT…LCNL), 152 to 172 (LKVL…IGHL), 173 to 195 (RHLM…IGNL), 196 to 218 (EALR…LAEL), 220 to 239 (LIRL…CYRN), 240 to 264 (LRHL…CIKG), and 266 to 290 (VHIF…DRRP). A mediates interaction with DOCK7 region spans residues 56–290 (AAVTGVLSLS…PDLPDYDRRP (235 aa)). Phosphoserine is present on residues Ser324, Ser415, and Ser419. Positions 382-648 (TAEEEEAEVR…DSTDSITGQN (267 aa)) are mediates direct interaction with MYO6. Residues 568-590 (FTPLKSDDRPNALLSSPATETVH) form a disordered region. A phosphoserine mark is found at Ser611 and Ser628. Residues 621-653 (ETNKGHASPLPPSAAPTTDSTDSITGQNSRQRE) form a disordered region. Low complexity predominate over residues 635-645 (APTTDSTDSIT). The Calponin-homology (CH) domain occupies 652–765 (REEELELIDQ…VTVQALLELA (114 aa)).

Component of the DOCK7-induced septin displacement/DISP complex, at least composed of DOCK7, LRCH3 and MYO6.

Its subcellular location is the cytoplasm. In terms of biological role, as part of the DISP complex, may regulate the association of septins with actin and thereby regulate the actin cytoskeleton. The protein is DISP complex protein LRCH3 of Homo sapiens (Human).